Consider the following 326-residue polypeptide: Putative [LysW]-lysine/[LysW]-ornithine hydrolase (326 aa).

His66 contributes to the Zn(2+) binding site. Asp68 is an active-site residue. Asp90 is a Zn(2+) binding site. The active-site Proton acceptor is the Glu117. 3 residues coordinate Zn(2+): Glu118, Glu139, and His297.

This sequence belongs to the peptidase M20A family. LysK subfamily. It depends on Zn(2+) as a cofactor. The cofactor is Co(2+).

Its subcellular location is the cytoplasm. It catalyses the reaction [amino-group carrier protein]-C-terminal-gamma-(L-lysyl)-L-glutamate + H2O = [amino-group carrier protein]-C-terminal-L-glutamate + L-lysine. It carries out the reaction [amino-group carrier protein]-C-terminal-gamma-(L-ornithyl)-L-glutamate + H2O = [amino-group carrier protein]-C-terminal-L-glutamate + L-ornithine. The protein operates within amino-acid biosynthesis; L-lysine biosynthesis via AAA pathway; L-lysine from L-alpha-aminoadipate (Thermus route): step 5/5. It functions in the pathway amino-acid biosynthesis; L-arginine biosynthesis. Catalyzes the release of L-lysine from [LysW]-gamma-L-lysine and the release of L-ornithine from [LysW]-L-ornithine. This chain is Putative [LysW]-lysine/[LysW]-ornithine hydrolase, found in Pyrococcus furiosus (strain ATCC 43587 / DSM 3638 / JCM 8422 / Vc1).